A 701-amino-acid polypeptide reads, in one-letter code: Phytyl ester synthase 2, chloroplastic (701 aa).

The transit peptide at 1–65 (MAVTVLPSVS…KNNDENRATV (65 aa)) directs the protein to the chloroplast. The disordered stretch occupies residues 37–64 (SVTSTSSPPTPSSGVQRRRKNNDENRAT).

Belongs to the diacylglycerol acyltransferase family.

Its subcellular location is the plastid. The protein resides in the chloroplast. It localises to the plastoglobule. It catalyses the reaction a 1,2-diacyl-3-O-(beta-D-galactosyl)-sn-glycerol + a 1,2-diacylglycerol = an acyl-3-O-(beta-D-galactosyl)-sn-glycerol + a triacylglycerol. It carries out the reaction a 1,2-diacylglycerol + a fatty acyl-CoA = a triacylglycerol + CoA. The catalysed reaction is a fatty acyl-[ACP] + a 1,2-diacylglycerol = a triacylglycerol + holo-[ACP]. The enzyme catalyses phytol + a fatty acyl-CoA = a fatty acid phytyl ester + CoA. It catalyses the reaction phytol + tetradecanoyl-CoA = tetradecanoate phytyl ester + CoA. It carries out the reaction a 1,3-diacylglycerol + a fatty acyl-CoA = a triacylglycerol + CoA. The catalysed reaction is 1,2-dihexanoylglycerol + tetradecanoyl-CoA = 1,2-dihexanoyl-3-tetradecanoylglycerol + CoA. The enzyme catalyses 1,2-dihexanoylglycerol + hexadecanoyl-CoA = 1,2-dihexanoyl-3-hexadecanoylglycerol + CoA. It catalyses the reaction 1,2-dihexanoylglycerol + octadecanoyl-CoA = 1,2-dihexanoyl-3-octadecanoylglycerol + CoA. It carries out the reaction (7Z,10Z,13Z)-hexadecatrienoyl-CoA + 1,2-dihexanoylglycerol = 1,2-dihexanoyl-3-(7Z,10Z,13Z-hexadecatrienoyl)-glycerol + CoA. The catalysed reaction is 1,2-dihexanoylglycerol + (9Z)-octadecenoyl-CoA = 1,2-dihexanoyl-3-(9Z-octadecenoyl)-glycerol + CoA. The enzyme catalyses 1,2-dihexanoylglycerol + (9Z,12Z,15Z)-octadecatrienoyl-CoA = 1,2-dihexanoyl-3-(9Z,12Z,15Z-octadecatrienoyl)-glycerol + CoA. It catalyses the reaction phytol + decanoyl-CoA = decanoate phytyl ester + CoA. It carries out the reaction (7Z,10Z,13Z)-hexadecatrienoyl-CoA + phytol = (7Z,10Z,13Z)-hexadecatrienoate phytyl ester + CoA. The catalysed reaction is phytol + dodecanoyl-CoA = dodecanoate phytyl ester + CoA. In terms of biological role, acyltransferase involved in fatty acid phytyl ester synthesis in chloroplasts, a process required for the maintenance of the photosynthetic membrane integrity during abiotic stress and senescence. Exhibits phytyl ester synthesis and diacylglycerol acyltransferase activities with broad substrate specificities, and can employ acyl-CoAs, acyl carrier proteins, and galactolipids as acyl donors. This is Phytyl ester synthase 2, chloroplastic from Arabidopsis thaliana (Mouse-ear cress).